Reading from the N-terminus, the 495-residue chain is Bifunctional protein GlmU (495 aa).

The interval 1 to 241 (MTFPGDTAVL…SALVAGVNNR (241 aa)) is pyrophosphorylase. UDP-N-acetyl-alpha-D-glucosamine contacts are provided by residues 12-15 (LAAG), Lys26, Gln83, 88-89 (GT), 112-114 (SGD), Gly151, Glu166, Asn181, and Asn239. Asp114 lines the Mg(2+) pocket. A Mg(2+)-binding site is contributed by Asn239. A linker region spans residues 242 to 262 (VQLAQLASELNRRVVAAHQLA). Residues 263-495 (GVTVVDPATT…TQPPDADQTP (233 aa)) form an N-acetyltransferase region. 2 residues coordinate UDP-N-acetyl-alpha-D-glucosamine: Arg344 and Lys362. His374 acts as the Proton acceptor in catalysis. UDP-N-acetyl-alpha-D-glucosamine is bound by residues Tyr377 and Asn388. Residues Ala391, 397–398 (NY), Ser416, and Ala434 each bind acetyl-CoA. Positions 457-495 (IENWVQRKRPGSPAAQASKRASEMACQQPTQPPDADQTP) are disordered. The span at 483–495 (QQPTQPPDADQTP) shows a compositional bias: low complexity.

The protein in the N-terminal section; belongs to the N-acetylglucosamine-1-phosphate uridyltransferase family. It in the C-terminal section; belongs to the transferase hexapeptide repeat family. As to quaternary structure, homotrimer. The cofactor is Mg(2+).

It is found in the cytoplasm. The catalysed reaction is alpha-D-glucosamine 1-phosphate + acetyl-CoA = N-acetyl-alpha-D-glucosamine 1-phosphate + CoA + H(+). It catalyses the reaction N-acetyl-alpha-D-glucosamine 1-phosphate + UTP + H(+) = UDP-N-acetyl-alpha-D-glucosamine + diphosphate. Its pathway is nucleotide-sugar biosynthesis; UDP-N-acetyl-alpha-D-glucosamine biosynthesis; N-acetyl-alpha-D-glucosamine 1-phosphate from alpha-D-glucosamine 6-phosphate (route II): step 2/2. The protein operates within nucleotide-sugar biosynthesis; UDP-N-acetyl-alpha-D-glucosamine biosynthesis; UDP-N-acetyl-alpha-D-glucosamine from N-acetyl-alpha-D-glucosamine 1-phosphate: step 1/1. It participates in bacterial outer membrane biogenesis; LPS lipid A biosynthesis. In terms of biological role, catalyzes the last two sequential reactions in the de novo biosynthetic pathway for UDP-N-acetylglucosamine (UDP-GlcNAc). The C-terminal domain catalyzes the transfer of acetyl group from acetyl coenzyme A to glucosamine-1-phosphate (GlcN-1-P) to produce N-acetylglucosamine-1-phosphate (GlcNAc-1-P), which is converted into UDP-GlcNAc by the transfer of uridine 5-monophosphate (from uridine 5-triphosphate), a reaction catalyzed by the N-terminal domain. The chain is Bifunctional protein GlmU from Mycobacterium bovis (strain ATCC BAA-935 / AF2122/97).